Reading from the N-terminus, the 194-residue chain is MTQCNGFLGGQLLIAMPGMNDKRFMRSVIYICAHSDAGAMGIILNQLHHIDFPELLLHLGVIDSGQKKCLSEPIKQFPVRYGGPVDPSRGFVLHSDDYACEETVFIADKVCFTATIDILKAISCEQGPQHALVALGYAGWKAGQLEAEISTNGWLISSTSPSFLFESDLSCKYDKSLTRMGIDPTYLASEMGHA.

It belongs to the UPF0301 (AlgH) family.

This Bartonella tribocorum (strain CIP 105476 / IBS 506) protein is UPF0301 protein BT_0659.